Here is a 319-residue protein sequence, read N- to C-terminus: MPVKVIEGLPAIDELRADNIFVMDNERAKNQNIRPLNLLVVNLMPRKLITDRQILRLLSNTPLQINVDFLFMASHEFKNTKQSHLDSFYKSFSEIKDDYYDGLIITGAPVEQLEFEEVDYWSEFLEIVKWSKSHVYSSLHICWGAQAALYARYEVTKENLPQKLCGIYKSSVEQPKNPLFRGFDDFFNYPQSRYTQSNPSEIKKVPDLEVLSTSKETGFSILAKKNLREVYLFGHLEYDRETLAWEYERDREEGLKPALPKNYFPKDNDKEKPQMSWASAASLFFSNWLNYAVYQGTPYLGERLGHHCGEENYDFNQKE.

The Acyl-thioester intermediate role is filled by C142. Residues K163 and S192 each coordinate substrate. H235 serves as the catalytic Proton acceptor. Residue E237 is part of the active site. R249 is a substrate binding site.

Belongs to the MetA family.

It localises to the cytoplasm. The catalysed reaction is L-homoserine + acetyl-CoA = O-acetyl-L-homoserine + CoA. It participates in amino-acid biosynthesis; L-methionine biosynthesis via de novo pathway; O-acetyl-L-homoserine from L-homoserine: step 1/1. Transfers an acetyl group from acetyl-CoA to L-homoserine, forming acetyl-L-homoserine. This chain is Homoserine O-acetyltransferase, found in Lactococcus lactis subsp. cremoris (strain MG1363).